The primary structure comprises 207 residues: Thiamine-phosphate synthase (207 aa).

4-amino-2-methyl-5-(diphosphooxymethyl)pyrimidine-binding positions include 35–39 and N67; that span reads QYRDK. Mg(2+)-binding residues include D68 and D86. T105 contacts 4-amino-2-methyl-5-(diphosphooxymethyl)pyrimidine. 132 to 134 serves as a coordination point for 2-[(2R,5Z)-2-carboxy-4-methylthiazol-5(2H)-ylidene]ethyl phosphate; sequence SVT. Residue K135 coordinates 4-amino-2-methyl-5-(diphosphooxymethyl)pyrimidine. A 2-[(2R,5Z)-2-carboxy-4-methylthiazol-5(2H)-ylidene]ethyl phosphate-binding site is contributed by G162.

This sequence belongs to the thiamine-phosphate synthase family. Mg(2+) is required as a cofactor.

The catalysed reaction is 2-[(2R,5Z)-2-carboxy-4-methylthiazol-5(2H)-ylidene]ethyl phosphate + 4-amino-2-methyl-5-(diphosphooxymethyl)pyrimidine + 2 H(+) = thiamine phosphate + CO2 + diphosphate. It catalyses the reaction 2-(2-carboxy-4-methylthiazol-5-yl)ethyl phosphate + 4-amino-2-methyl-5-(diphosphooxymethyl)pyrimidine + 2 H(+) = thiamine phosphate + CO2 + diphosphate. It carries out the reaction 4-methyl-5-(2-phosphooxyethyl)-thiazole + 4-amino-2-methyl-5-(diphosphooxymethyl)pyrimidine + H(+) = thiamine phosphate + diphosphate. Its pathway is cofactor biosynthesis; thiamine diphosphate biosynthesis; thiamine phosphate from 4-amino-2-methyl-5-diphosphomethylpyrimidine and 4-methyl-5-(2-phosphoethyl)-thiazole: step 1/1. Condenses 4-methyl-5-(beta-hydroxyethyl)thiazole monophosphate (THZ-P) and 2-methyl-4-amino-5-hydroxymethyl pyrimidine pyrophosphate (HMP-PP) to form thiamine monophosphate (TMP). This Pseudomonas putida (strain ATCC 700007 / DSM 6899 / JCM 31910 / BCRC 17059 / LMG 24140 / F1) protein is Thiamine-phosphate synthase.